A 90-amino-acid polypeptide reads, in one-letter code: Acylphosphatase (90 aa).

The region spanning 3–90 (AIEVDVFGLV…FETNDFAIRG (88 aa)) is the Acylphosphatase-like domain. Catalysis depends on residues R18 and N36.

It belongs to the acylphosphatase family.

The catalysed reaction is an acyl phosphate + H2O = a carboxylate + phosphate + H(+). This is Acylphosphatase (acyP) from Leuconostoc mesenteroides subsp. mesenteroides (strain ATCC 8293 / DSM 20343 / BCRC 11652 / CCM 1803 / JCM 6124 / NCDO 523 / NBRC 100496 / NCIMB 8023 / NCTC 12954 / NRRL B-1118 / 37Y).